A 376-amino-acid polypeptide reads, in one-letter code: TelA-like protein SE_1089 (376 aa).

This sequence belongs to the TelA family.

This chain is TelA-like protein SE_1089, found in Staphylococcus epidermidis (strain ATCC 12228 / FDA PCI 1200).